We begin with the raw amino-acid sequence, 130 residues long: Fluoride-specific ion channel FluC (130 aa).

The next 4 helical transmembrane spans lie at 10–30 (FAVA…SLWF), 41–61 (GTLI…TVAM), 72–89 (LLFG…STYE), and 105–125 (LVYW…GILL). Residues Gly80 and Thr83 each contribute to the Na(+) site.

It belongs to the fluoride channel Fluc/FEX (TC 1.A.43) family.

The protein localises to the cell inner membrane. It catalyses the reaction fluoride(in) = fluoride(out). With respect to regulation, na(+) is not transported, but it plays an essential structural role and its presence is essential for fluoride channel function. Its function is as follows. Fluoride-specific ion channel. Important for reducing fluoride concentration in the cell, thus reducing its toxicity. This is Fluoride-specific ion channel FluC from Synechococcus sp. (strain JA-2-3B'a(2-13)) (Cyanobacteria bacterium Yellowstone B-Prime).